The primary structure comprises 578 residues: Longifolene synthase (578 aa).

Mg(2+) contacts are provided by aspartate 331, aspartate 335, and aspartate 475. Residues 331-335 carry the DDXXD motif motif; the sequence is DDLYD.

It belongs to the terpene synthase family. Tpsd subfamily. Mg(2+) is required as a cofactor. The cofactor is Mn(2+).

It localises to the cytoplasm. The enzyme catalyses (2E,6E)-farnesyl diphosphate = longifolene + diphosphate. The protein operates within sesquiterpene biosynthesis. It participates in terpene metabolism; oleoresin biosynthesis. Involved in defensive oleoresin formation in conifers in response to insect attack or other injury. Involved in sesquiterpene (C15) olefins biosynthesis. Produces mainly longifolene, but also multiple minor products including alpha-longipinene, alpha-longicyclene, E-beta-farnesene, longiborneol, cyclosativene, beta-longipinene, and 12 other sesquiterpenes when used with farnesyl diphosphate (FPP) as substrate. This chain is Longifolene synthase (TPS-Lon), found in Picea abies (Norway spruce).